The sequence spans 205 residues: LexA repressor (205 aa).

Positions 28–48 form a DNA-binding region, H-T-H motif; sequence RAEIAHKLGFRSANSAEEHLK. Catalysis depends on for autocatalytic cleavage activity residues Ser-122 and Lys-159.

It belongs to the peptidase S24 family. In terms of assembly, homodimer.

It catalyses the reaction Hydrolysis of Ala-|-Gly bond in repressor LexA.. Functionally, represses a number of genes involved in the response to DNA damage (SOS response), including recA and lexA. In the presence of single-stranded DNA, RecA interacts with LexA causing an autocatalytic cleavage which disrupts the DNA-binding part of LexA, leading to derepression of the SOS regulon and eventually DNA repair. This Idiomarina loihiensis (strain ATCC BAA-735 / DSM 15497 / L2-TR) protein is LexA repressor.